The sequence spans 493 residues: Ribulose bisphosphate carboxylase large chain (493 aa).

Positions 132 and 182 each coordinate substrate. Residue lysine 184 is the Proton acceptor of the active site. Lysine 186 serves as a coordination point for substrate. Residues lysine 210, aspartate 212, and glutamate 213 each contribute to the Mg(2+) site. N6-carboxylysine is present on lysine 210. Catalysis depends on histidine 302, which acts as the Proton acceptor. 3 residues coordinate substrate: arginine 303, histidine 335, and serine 387.

Belongs to the RuBisCO large chain family. Type I subfamily. Heterohexadecamer of 8 large chains and 8 small chains. It depends on Mg(2+) as a cofactor.

It carries out the reaction 2 (2R)-3-phosphoglycerate + 2 H(+) = D-ribulose 1,5-bisphosphate + CO2 + H2O. It catalyses the reaction D-ribulose 1,5-bisphosphate + O2 = 2-phosphoglycolate + (2R)-3-phosphoglycerate + 2 H(+). Its function is as follows. RuBisCO catalyzes two reactions: the carboxylation of D-ribulose 1,5-bisphosphate, the primary event in carbon dioxide fixation, as well as the oxidative fragmentation of the pentose substrate. Both reactions occur simultaneously and in competition at the same active site. The chain is Ribulose bisphosphate carboxylase large chain from Acidiphilium cryptum (strain JF-5).